Consider the following 255-residue polypeptide: BPI fold-containing family A member 1 (255 aa).

Residues 1–19 form the signal peptide; that stretch reads MFHIGSLVVLCGLLAPTTA. The interval 87–92 is important for surfactant activity and antibacterial properties; it reads LLGSLL. 3 N-linked (GlcNAc...) asparagine glycosylation sites follow: asparagine 157, asparagine 178, and asparagine 205. Cysteine 179 and cysteine 223 are disulfide-bonded.

This sequence belongs to the BPI/LBP/Plunc superfamily. Plunc family. As to quaternary structure, monomer. Interacts (via N-terminus) with SCNN1B, a subunit of the heterotrimeric epithelial sodium channel (ENaC); this inhibits proteolytic activation of ENaC. As to expression, expressed in trachea, and at lower levels in nasal epithelium.

It localises to the secreted. In terms of biological role, lipid-binding protein which shows high specificity for the surfactant phospholipid dipalmitoylphosphatidylcholine (DPPC). Plays a role in the innate immune responses of the upper airways. Reduces the surface tension in secretions from airway epithelia and inhibits the formation of biofilm by pathogenic Gram-negative bacteria, such as P.aeruginosa and K.pneumoniae. Negatively regulates proteolytic cleavage of SCNN1G, an event that is required for activation of the epithelial sodium channel (ENaC), and thereby contributes to airway surface liquid homeostasis and proper clearance of mucus. Plays a role in the airway inflammatory response after exposure to irritants. May attract macrophages and neutrophils. This is BPI fold-containing family A member 1 (BPIFA1) from Bos taurus (Bovine).